A 546-amino-acid polypeptide reads, in one-letter code: Chaperonin GroEL (546 aa).

Residues 30–33 (TLGP), lysine 51, 87–91 (DGTTT), glycine 415, and aspartate 495 each bind ATP.

The protein belongs to the chaperonin (HSP60) family. In terms of assembly, forms a cylinder of 14 subunits composed of two heptameric rings stacked back-to-back. Interacts with the co-chaperonin GroES.

It localises to the cytoplasm. The enzyme catalyses ATP + H2O + a folded polypeptide = ADP + phosphate + an unfolded polypeptide.. Functionally, together with its co-chaperonin GroES, plays an essential role in assisting protein folding. The GroEL-GroES system forms a nano-cage that allows encapsulation of the non-native substrate proteins and provides a physical environment optimized to promote and accelerate protein folding. The polypeptide is Chaperonin GroEL (Brucella melitensis biotype 2 (strain ATCC 23457)).